A 274-amino-acid polypeptide reads, in one-letter code: STVLLFSSILLMLKNNLNNEINESFTSMIIMSALLLKSGAAPFHFWFPNMMEGLTWMNALVLMTWQKIAPLMLISYLNIKYLLLISVILSVIIGAIGGLNQTSLRKLMAFSSINHLGWMLSSLMISESIWLIYFFFYSFLSFVLTFMFNIFKLFHLNQLFSWFVNSKILKFTLFMNFLSLGGLPPFLGFLPKWLVIQQLTLCNQYFLLLLMMMSTLITLFFYLRICYSAFMMNYFENNWIMKMNMISSNTNMYLIMTFFSIFGLFMISLFYFMF.

8 consecutive transmembrane segments (helical) span residues 28–48, 54–74, 79–99, 107–127, 128–148, 171–191, 206–226, and 254–274; these read MIIM…FWFP, LTWM…LMLI, IKYL…IGGL, LMAF…MISE, SIWL…TFMF, FTLF…GFLP, FLLL…LRIC, and LIMT…YFMF.

Belongs to the complex I subunit 2 family.

The protein localises to the mitochondrion inner membrane. It catalyses the reaction a ubiquinone + NADH + 5 H(+)(in) = a ubiquinol + NAD(+) + 4 H(+)(out). Core subunit of the mitochondrial membrane respiratory chain NADH dehydrogenase (Complex I) that is believed to belong to the minimal assembly required for catalysis. Complex I functions in the transfer of electrons from NADH to the respiratory chain. The immediate electron acceptor for the enzyme is believed to be ubiquinone. The chain is NADH-ubiquinone oxidoreductase chain 2 (mt:ND2) from Drosophila mauritiana (Fruit fly).